A 261-amino-acid polypeptide reads, in one-letter code: Cytochrome c oxidase subunit 3 (261 aa).

Topologically, residues 1-15 (MAHQAHAYHMVDPSP) are mitochondrial matrix. The chain crosses the membrane as a helical span at residues 16-34 (WPLTGAIAALLLTSGTAVW). Over 35 to 40 (FHFHSL) the chain is Mitochondrial intermembrane. Residues 41-66 (TLLTLGNILLLLTMYQWWRDIIREGT) traverse the membrane as a helical segment. Residues 67–72 (FQGHHT) lie on the Mitochondrial matrix side of the membrane. Residues 73 to 105 (PPVQKGLRYGMILFITSEVFFFLGFFWAFYHAS) form a helical membrane-spanning segment. Residues 106-128 (LAPTPELGGCWPPTGITTLDPFE) lie on the Mitochondrial intermembrane side of the membrane. The helical transmembrane segment at 129 to 152 (VPLLNTAVLLASGVTVTWAHHSIM) threads the bilayer. The Mitochondrial matrix portion of the chain corresponds to 153-155 (EGE). The helical transmembrane segment at 156 to 183 (RKQTIQALTLTILLGFYFTFLQGMEYYE) threads the bilayer. Over 184–190 (APFTIAD) the chain is Mitochondrial intermembrane. The helical transmembrane segment at 191–223 (GVYGSTFFVATGFHGLHVIIGSTFLAVCLLRQV) threads the bilayer. Residues 224 to 232 (QYHFTSEHH) lie on the Mitochondrial matrix side of the membrane. Residues 233–256 (FGFEAAAWYWHFVDVVWLFLYVSI) form a helical membrane-spanning segment. The Mitochondrial intermembrane portion of the chain corresponds to 257 to 261 (YWWGS).

It belongs to the cytochrome c oxidase subunit 3 family. As to quaternary structure, component of the cytochrome c oxidase (complex IV, CIV), a multisubunit enzyme composed of 14 subunits. The complex is composed of a catalytic core of 3 subunits MT-CO1, MT-CO2 and MT-CO3, encoded in the mitochondrial DNA, and 11 supernumerary subunits COX4I, COX5A, COX5B, COX6A, COX6B, COX6C, COX7A, COX7B, COX7C, COX8 and NDUFA4, which are encoded in the nuclear genome. The complex exists as a monomer or a dimer and forms supercomplexes (SCs) in the inner mitochondrial membrane with NADH-ubiquinone oxidoreductase (complex I, CI) and ubiquinol-cytochrome c oxidoreductase (cytochrome b-c1 complex, complex III, CIII), resulting in different assemblies (supercomplex SCI(1)III(2)IV(1) and megacomplex MCI(2)III(2)IV(2)).

It localises to the mitochondrion inner membrane. It carries out the reaction 4 Fe(II)-[cytochrome c] + O2 + 8 H(+)(in) = 4 Fe(III)-[cytochrome c] + 2 H2O + 4 H(+)(out). In terms of biological role, component of the cytochrome c oxidase, the last enzyme in the mitochondrial electron transport chain which drives oxidative phosphorylation. The respiratory chain contains 3 multisubunit complexes succinate dehydrogenase (complex II, CII), ubiquinol-cytochrome c oxidoreductase (cytochrome b-c1 complex, complex III, CIII) and cytochrome c oxidase (complex IV, CIV), that cooperate to transfer electrons derived from NADH and succinate to molecular oxygen, creating an electrochemical gradient over the inner membrane that drives transmembrane transport and the ATP synthase. Cytochrome c oxidase is the component of the respiratory chain that catalyzes the reduction of oxygen to water. Electrons originating from reduced cytochrome c in the intermembrane space (IMS) are transferred via the dinuclear copper A center (CU(A)) of subunit 2 and heme A of subunit 1 to the active site in subunit 1, a binuclear center (BNC) formed by heme A3 and copper B (CU(B)). The BNC reduces molecular oxygen to 2 water molecules using 4 electrons from cytochrome c in the IMS and 4 protons from the mitochondrial matrix. The chain is Cytochrome c oxidase subunit 3 (mt-co3) from Oncorhynchus clarkii (Cutthroat trout).